Consider the following 574-residue polypeptide: Fusion glycoprotein F0 (574 aa).

The first 25 residues, 1-25 (MELPILKTNAITAILAAVTLCFASS), serve as a signal peptide directing secretion. Residues 26-524 (QNITEEFYQS…NVNAGKSTTN (499 aa)) are Extracellular-facing. Asn-27 and Asn-70 each carry an N-linked (GlcNAc...) asparagine; by host glycan. Disulfide bonds link Cys-37/Cys-439, Cys-69/Cys-212, Cys-313/Cys-343, Cys-322/Cys-333, Cys-358/Cys-367, Cys-382/Cys-393, and Cys-416/Cys-422. Positions 76–96 (VKLIKQELDKYKSAVTELQLL) form a coiled coil. N-linked (GlcNAc...) asparagine; by host glycans are attached at residues Asn-116, Asn-120, and Asn-126. The segment at 137–157 (FLGFLLGVGSAIASGIAVSKV) is fusion peptide. A coiled-coil region spans residues 153–209 (AVSKVLHLEGEVNKIKSALLSTNKAVVSLSNGVSVLTSKVLDLKNYIDKQLLPIVNK). A coiled-coil region spans residues 481–516 (LVFPSDEFDASISQVNEKINQSLAFIRKSDELLHNV). An N-linked (GlcNAc...) asparagine; by host glycan is attached at Asn-500. A helical membrane pass occupies residues 525-550 (IMITTIIIVIIVILLSLIAVGLLLYC). Cys-550 carries S-palmitoyl cysteine; by host lipidation. Topologically, residues 551–574 (KARSTPVTLSKDQLSGINNIAFSN) are cytoplasmic.

Belongs to the paramyxoviruses fusion glycoprotein family. As to quaternary structure, homotrimer. Heterodimer with fusion protein F2; disulfide-linked. Interacts with host NCL; this interaction plays a role in viral entry into the host cell. As a heterodimer with F2, interacts with host heparan sulfate. As a heterodimer with F2, interacts with host IGF1R; this interaction activates PRKCZ/PKCzeta that recruits NCL/nucleolin from the host nucleus to the plasma membrane. Part of a complex composed of F1, F2 and G glycoproteins. As a heterodimer with F2, interacts with host RHOA; this interaction facilitates virus-induced syncytium formation. Homotrimer. Heterodimer with fusion protein F1; disulfide-linked. As a heterodimer with F1, interacts with host heparan sulfate. As a heterodimer with F1, interacts with host IGF1R; this interaction activates PRKCZ/PKCzeta that recruits NCL/nucleolin from the host nucleus to the plasma membrane. Part of a complex composed of F1, F2 and G glycoproteins. As a heterodimer with F1, interacts with host RHOA; this interaction facilitates virus-induced syncytium formation. The F glycoprotein is synthesized as a F0 inactive precursor that is heavily N-glycosylated and processed at two sites by a host furin-like protease probably in the Golgi. The cleavage site between p27 and F1 may occur after endocytosis to yield the mature F1 and F2 proteins. Both cleavages are required for membrane fusion and p27 is released from the processed protein.

Its subcellular location is the host Golgi apparatus membrane. The protein resides in the virion membrane. The protein localises to the host cell membrane. Functionally, inactive precursor that is cleaved at two sites by a furin-like protease to give rise to the mature F1 and F2 fusion glycoproteins. Class I viral fusion protein. Under the current model, the protein has at least 3 conformational states: pre-fusion native state, pre-hairpin intermediate state, and post-fusion hairpin state. During viral and plasma cell membrane fusion, the coiled coil regions assume a trimer-of-hairpins structure, positioning the fusion peptide in close proximity to the C-terminal region of the ectodomain. The formation of this structure appears to drive apposition and subsequent fusion of viral and cellular membranes leading to delivery of the nucleocapsid into the cytoplasm. This fusion is pH independent and occurs at the plasma or endosomal membrane. The trimer of F1-F2 (F protein) also facilitates the attachment to host cell by binding to host heparan sulfate. F protein is involved in the entry into the host cell through the interaction with host IGF1R. This interaction activates PRKCZ/PKCzeta that recruits host NCL/nucleolin to the apical cell surface where it can bind fusion glycoprotein F1. Later in infection, F protein expressed at the plasma membrane of infected cells can mediate fusion with adjacent cells to form syncytia, a cytopathic effect that could lead to tissue necrosis. F protein may trigger p53-dependent apoptosis. Its function is as follows. Major determinant of the species specificity of RSV infection. The trimer of F1-F2 (F protein) also facilitates the attachment to host cell by binding to host heparan sulfate. F protein is involved in the entry into the host cell through the interaction with host IGF1R. This interaction activates PRKCZ/PKCzeta that recruits host NCL/nucleolin to the apical cell surface where it can bind fusion glycoprotein F1. Later in infection, F protein expressed at the plasma membrane of infected cells can mediate fusion with adjacent cells to form syncytia, a cytopathic effect that could lead to tissue necrosis. F protein seems to trigger p53-dependent apoptosis. In Human respiratory syncytial virus A (strain RSS-2), this protein is Fusion glycoprotein F0 (F).